Consider the following 382-residue polypeptide: Intermediate transcription factor 3 large subunit (382 aa).

This sequence belongs to the poxviruses A23 family. In terms of assembly, heterodimer of a 45 kDa and a 32 kDa subunit.

Functionally, acts with RNA polymerase to initiate transcription from intermediate gene promoters. The chain is Intermediate transcription factor 3 large subunit (VITF3L) from Ectromelia virus (strain Moscow) (ECTV).